The following is a 293-amino-acid chain: D-alanine--D-alanine ligase (293 aa).

The region spanning K98–N291 is the ATP-grasp domain. D124–T177 lines the ATP pocket. Positions 245, 258, and 260 each coordinate Mg(2+).

This sequence belongs to the D-alanine--D-alanine ligase family. The cofactor is Mg(2+). It depends on Mn(2+) as a cofactor.

It is found in the cytoplasm. The catalysed reaction is 2 D-alanine + ATP = D-alanyl-D-alanine + ADP + phosphate + H(+). It participates in cell wall biogenesis; peptidoglycan biosynthesis. Functionally, cell wall formation. This is D-alanine--D-alanine ligase from Ruthia magnifica subsp. Calyptogena magnifica.